A 640-amino-acid polypeptide reads, in one-letter code: Biosynthetic arginine decarboxylase (640 aa).

The residue at position 105 (K105) is an N6-(pyridoxal phosphate)lysine. A substrate-binding site is contributed by 290–300 (FDVGGGLAVDY).

This sequence belongs to the Orn/Lys/Arg decarboxylase class-II family. SpeA subfamily. The cofactor is Mg(2+). Pyridoxal 5'-phosphate serves as cofactor.

The catalysed reaction is L-arginine + H(+) = agmatine + CO2. In terms of biological role, catalyzes the biosynthesis of agmatine from arginine. The sequence is that of Biosynthetic arginine decarboxylase from Vibrio cholerae serotype O1 (strain ATCC 39315 / El Tor Inaba N16961).